The sequence spans 518 residues: Glucose-6-phosphate 1-dehydrogenase (518 aa).

Residues 36–43, arginine 70, and lysine 169 each bind NADP(+); that span reads GASGDLAK. D-glucose 6-phosphate-binding positions include lysine 169, 199–203, glutamate 237, and aspartate 256; that span reads HYLGK. Histidine 261 serves as the catalytic Proton acceptor. Arginine 356 serves as a coordination point for NADP(+). The D-glucose 6-phosphate site is built by lysine 359 and arginine 364. Residues lysine 365, arginine 369, and arginine 392 each contribute to the NADP(+) site. Glutamine 394 contacts D-glucose 6-phosphate. NADP(+)-binding positions include 400–402, 420–422, arginine 486, tyrosine 502, and tryptophan 508; these read YFK and DLT.

It belongs to the glucose-6-phosphate dehydrogenase family.

It localises to the cytoplasm. The protein resides in the cytosol. It catalyses the reaction D-glucose 6-phosphate + NADP(+) = 6-phospho-D-glucono-1,5-lactone + NADPH + H(+). Its pathway is carbohydrate degradation; pentose phosphate pathway; D-ribulose 5-phosphate from D-glucose 6-phosphate (oxidative stage): step 1/3. Cytosolic glucose-6-phosphate dehydrogenase that catalyzes the first and rate-limiting step of the oxidative branch within the pentose phosphate pathway/shunt, an alternative route to glycolysis for the dissimilation of carbohydrates and a major source of reducing power and metabolic intermediates for fatty acid and nucleic acid biosynthetic processes. The polypeptide is Glucose-6-phosphate 1-dehydrogenase (Zw) (Drosophila yakuba (Fruit fly)).